The chain runs to 808 residues: Protein translocase subunit SecA (808 aa).

ATP is bound by residues Gln87, Gly105–Thr109, and Asp493.

Belongs to the SecA family. Monomer and homodimer. Part of the essential Sec protein translocation apparatus which comprises SecA, SecYEG and auxiliary proteins SecDF. Other proteins may also be involved.

It localises to the cell membrane. The protein resides in the cytoplasm. It carries out the reaction ATP + H2O + cellular proteinSide 1 = ADP + phosphate + cellular proteinSide 2.. Functionally, part of the Sec protein translocase complex. Interacts with the SecYEG preprotein conducting channel. Has a central role in coupling the hydrolysis of ATP to the transfer of proteins into and across the cell membrane, serving as an ATP-driven molecular motor driving the stepwise translocation of polypeptide chains across the membrane. The polypeptide is Protein translocase subunit SecA (Mycoplasma pneumoniae (strain ATCC 29342 / M129 / Subtype 1) (Mycoplasmoides pneumoniae)).